The chain runs to 1167 residues: DNA-directed RNA polymerase subunit beta (1167 aa).

This sequence belongs to the RNA polymerase beta chain family. In terms of assembly, the RNAP catalytic core consists of 2 alpha, 1 beta, 1 beta' and 1 omega subunit. When a sigma factor is associated with the core the holoenzyme is formed, which can initiate transcription.

The catalysed reaction is RNA(n) + a ribonucleoside 5'-triphosphate = RNA(n+1) + diphosphate. In terms of biological role, DNA-dependent RNA polymerase catalyzes the transcription of DNA into RNA using the four ribonucleoside triphosphates as substrates. In Mycolicibacterium vanbaalenii (strain DSM 7251 / JCM 13017 / BCRC 16820 / KCTC 9966 / NRRL B-24157 / PYR-1) (Mycobacterium vanbaalenii), this protein is DNA-directed RNA polymerase subunit beta.